We begin with the raw amino-acid sequence, 425 residues long: Enolase (425 aa).

Gln-163 is a (2R)-2-phosphoglycerate binding site. Catalysis depends on Glu-205, which acts as the Proton donor. Residues Asp-242, Glu-285, and Asp-312 each coordinate Mg(2+). (2R)-2-phosphoglycerate is bound by residues Lys-337, Arg-366, Ser-367, and Lys-388. Lys-337 acts as the Proton acceptor in catalysis.

Belongs to the enolase family. The cofactor is Mg(2+).

The protein resides in the cytoplasm. It localises to the secreted. Its subcellular location is the cell surface. The catalysed reaction is (2R)-2-phosphoglycerate = phosphoenolpyruvate + H2O. It participates in carbohydrate degradation; glycolysis; pyruvate from D-glyceraldehyde 3-phosphate: step 4/5. Its function is as follows. Catalyzes the reversible conversion of 2-phosphoglycerate (2-PG) into phosphoenolpyruvate (PEP). It is essential for the degradation of carbohydrates via glycolysis. The sequence is that of Enolase from Acidiphilium cryptum (strain JF-5).